Reading from the N-terminus, the 530-residue chain is Autoinducer-2 kinase (530 aa).

Belongs to the FGGY kinase family.

Its subcellular location is the cytoplasm. The catalysed reaction is (S)-4,5-dihydroxypentane-2,3-dione + ATP = (2S)-2-hydroxy-3,4-dioxopentyl phosphate + ADP + H(+). Catalyzes the phosphorylation of autoinducer-2 (AI-2) to phospho-AI-2, which subsequently inactivates the transcriptional regulator LsrR and leads to the transcription of the lsr operon. Phosphorylates the ring-open form of (S)-4,5-dihydroxypentane-2,3-dione (DPD), which is the precursor to all AI-2 signaling molecules, at the C5 position. The protein is Autoinducer-2 kinase of Salmonella paratyphi B (strain ATCC BAA-1250 / SPB7).